A 679-amino-acid polypeptide reads, in one-letter code: Protein hook (679 aa).

The Calponin-homology (CH) domain maps to 5 to 123 (NGMYYSLLEW…RLLQLVLGCA (119 aa)). A coiled-coil region spans residues 140-627 (EEELQANIMR…SKTKMSTMEE (488 aa)).

The protein belongs to the hook family. Homodimer. Interacts with microtubules via its N-terminus.

It is found in the cytoplasm. The protein localises to the cytoskeleton. It localises to the endosome. The protein resides in the synapse. Involved in endocytic trafficking by stabilizing organelles of the endocytic pathway. Probably acts as a cytoskeletal linker protein required to tether endosome vesicles to the cytoskeleton. Involved in modulation of endocytosis at stages required for down-regulation of membrane proteins that control synapse size. Not involved in synaptic vesicle recycling. Required in R7 cells for boss endocytosis into multivesicular bodies (MVBs). Has a role in regulating adult longevity. The sequence is that of Protein hook from Drosophila mojavensis (Fruit fly).